The following is a 457-amino-acid chain: Ig mu chain C region (457 aa).

The CH1 stretch occupies residues 1–105; that stretch reads SSSAPLLFPL…GEKEKKVELQ (105 aa). A disulfide bridge links cysteine 27 with cysteine 89. Asparagine 45 and asparagine 113 each carry an N-linked (GlcNAc...) asparagine glycan. The segment at 106 to 220 is CH2; it reads VTPELPPNVS…KNVSSVCMGD (115 aa). A disulfide bridge connects residues cysteine 136 and cysteine 200. N-linked (GlcNAc...) asparagine glycosylation is found at asparagine 212, asparagine 276, and asparagine 283. Residues 221–326 form a CH3 region; the sequence is DTSTGISVFL…PLKQSLSRPK (106 aa). 2 disulfides stabilise this stretch: cysteine 248-cysteine 307 and cysteine 355-cysteine 417. The segment at 327–457 is CH4; it reads DVANDPPSVF…VLSDTASTCY (131 aa). N-linked (GlcNAc...) asparagine glycosylation occurs at asparagine 444.

The sequence is that of Ig mu chain C region from Suncus murinus (Asian house shrew).